A 224-amino-acid polypeptide reads, in one-letter code: MGLKPPLKTRNPRNPAVAGVGLRPQPLLIDSIPCHRGVAGVDEVGRGCLFGPVFAGAVVLEAANASRLQQEGLTDSKRLSARRRGDLVPLIEHEAEAWGLGQSSTREIDRLGIRPATELAMLRALQRLPNRPELVLVDGNLPLRPWTGEQRSIVAGDQHSLAIAAASVIAKQCRDALMQRLSQRFPGYGLERHAGYGTALHRAALLDLGPSALHRRSFLRRFLG.

The RNase H type-2 domain maps to R36–G224. A divalent metal cation is bound by residues D42, E43, and D138.

It belongs to the RNase HII family. Requires Mn(2+) as cofactor. Mg(2+) is required as a cofactor.

It localises to the cytoplasm. The catalysed reaction is Endonucleolytic cleavage to 5'-phosphomonoester.. Endonuclease that specifically degrades the RNA of RNA-DNA hybrids. This is Ribonuclease HII from Parasynechococcus marenigrum (strain WH8102).